The sequence spans 341 residues: L-threonine 3-dehydrogenase (341 aa).

Residue cysteine 38 participates in Zn(2+) binding. Residues threonine 40 and histidine 43 each act as charge relay system in the active site. Histidine 63, glutamate 64, cysteine 93, cysteine 96, cysteine 99, and cysteine 107 together coordinate Zn(2+). Residues isoleucine 175, aspartate 195, arginine 200, 262 to 264 (LGI), and 286 to 287 (IY) each bind NAD(+).

Belongs to the zinc-containing alcohol dehydrogenase family. In terms of assembly, homotetramer. It depends on Zn(2+) as a cofactor.

The protein localises to the cytoplasm. The catalysed reaction is L-threonine + NAD(+) = (2S)-2-amino-3-oxobutanoate + NADH + H(+). Its pathway is amino-acid degradation; L-threonine degradation via oxydo-reductase pathway; glycine from L-threonine: step 1/2. In terms of biological role, catalyzes the NAD(+)-dependent oxidation of L-threonine to 2-amino-3-ketobutyrate. The polypeptide is L-threonine 3-dehydrogenase (Idiomarina loihiensis (strain ATCC BAA-735 / DSM 15497 / L2-TR)).